Reading from the N-terminus, the 198-residue chain is Large ribosomal subunit protein bL12m (198 aa).

Residues 1–36 (MLPAAARPLWGPCLGLRAAAFRLARRQVPCVCAVRH) constitute a mitochondrion transit peptide. N6-acetyllysine is present on residues lysine 125, lysine 138, lysine 142, and lysine 144. Lysine 150 is subject to N6-acetyllysine; alternate. Residue lysine 150 is modified to N6-succinyllysine; alternate. Residue lysine 150 forms a Glycyl lysine isopeptide (Lys-Gly) (interchain with G-Cter in ubiquitin) linkage. Lysine 162 carries the N6-succinyllysine modification. Lysine 163 and lysine 173 each carry N6-acetyllysine. An N6-acetyllysine; alternate modification is found at lysine 178. The residue at position 178 (lysine 178) is an N6-succinyllysine; alternate. At lysine 185 the chain carries N6-acetyllysine.

The protein belongs to the bacterial ribosomal protein bL12 family. In terms of assembly, component of the mitochondrial large ribosomal subunit (mt-LSU). Mature mammalian 55S mitochondrial ribosomes consist of a small (28S) and a large (39S) subunit. The 28S small subunit contains a 12S ribosomal RNA (12S mt-rRNA) and 30 different proteins. The 39S large subunit contains a 16S rRNA (16S mt-rRNA), a copy of mitochondrial valine transfer RNA (mt-tRNA(Val)), which plays an integral structural role, and 52 different proteins. bL12m interacts with NOA1. Two mature forms are produced by differential two-step proteolytic cleavage. Cleaved by the mitochondrial processing protease to produce the long mature form and subsequently by the mitochondrial intermediate protease to produce the short mature form. Post-translationally, in the presence of CUL3, undergoes 'Lys-63'-linked ubiquitination at Lys-150 which results in proteasomal degradation.

It localises to the mitochondrion matrix. Functionally, as a component of the mitochondrial large ribosomal subunit, plays a role in mitochondrial translation. When present in mitochondria as a free protein not associated with the ribosome, associates with mitochondrial RNA polymerase POLRMT to activate transcription. Required for POLRMT stability. The polypeptide is Large ribosomal subunit protein bL12m (MRPL12) (Homo sapiens (Human)).